Here is a 343-residue protein sequence, read N- to C-terminus: N-acetyl-gamma-glutamyl-phosphate reductase (343 aa).

Cys-146 is an active-site residue.

Belongs to the NAGSA dehydrogenase family. Type 1 subfamily.

Its subcellular location is the cytoplasm. The catalysed reaction is N-acetyl-L-glutamate 5-semialdehyde + phosphate + NADP(+) = N-acetyl-L-glutamyl 5-phosphate + NADPH + H(+). It participates in amino-acid biosynthesis; L-arginine biosynthesis; N(2)-acetyl-L-ornithine from L-glutamate: step 3/4. Functionally, catalyzes the NADPH-dependent reduction of N-acetyl-5-glutamyl phosphate to yield N-acetyl-L-glutamate 5-semialdehyde. The protein is N-acetyl-gamma-glutamyl-phosphate reductase of Arthrobacter sp. (strain FB24).